Reading from the N-terminus, the 303-residue chain is Glycine--tRNA ligase alpha subunit (303 aa).

This sequence belongs to the class-II aminoacyl-tRNA synthetase family. As to quaternary structure, tetramer of two alpha and two beta subunits.

The protein localises to the cytoplasm. It catalyses the reaction tRNA(Gly) + glycine + ATP = glycyl-tRNA(Gly) + AMP + diphosphate. This is Glycine--tRNA ligase alpha subunit from Salmonella agona (strain SL483).